Here is a 480-residue protein sequence, read N- to C-terminus: Protein nucleotidyltransferase YdiU (480 aa).

ATP is bound by residues Gly86, Gly88, Arg89, Lys109, Asp121, Gly122, Arg172, and Arg179. Asp248 serves as the catalytic Proton acceptor. Residues Asn249 and Asp258 each contribute to the Mg(2+) site. Position 258 (Asp258) interacts with ATP.

This sequence belongs to the SELO family. Requires Mg(2+) as cofactor. It depends on Mn(2+) as a cofactor.

The catalysed reaction is L-seryl-[protein] + ATP = 3-O-(5'-adenylyl)-L-seryl-[protein] + diphosphate. It catalyses the reaction L-threonyl-[protein] + ATP = 3-O-(5'-adenylyl)-L-threonyl-[protein] + diphosphate. The enzyme catalyses L-tyrosyl-[protein] + ATP = O-(5'-adenylyl)-L-tyrosyl-[protein] + diphosphate. It carries out the reaction L-histidyl-[protein] + UTP = N(tele)-(5'-uridylyl)-L-histidyl-[protein] + diphosphate. The catalysed reaction is L-seryl-[protein] + UTP = O-(5'-uridylyl)-L-seryl-[protein] + diphosphate. It catalyses the reaction L-tyrosyl-[protein] + UTP = O-(5'-uridylyl)-L-tyrosyl-[protein] + diphosphate. Nucleotidyltransferase involved in the post-translational modification of proteins. It can catalyze the addition of adenosine monophosphate (AMP) or uridine monophosphate (UMP) to a protein, resulting in modifications known as AMPylation and UMPylation. This chain is Protein nucleotidyltransferase YdiU, found in Klebsiella pneumoniae subsp. pneumoniae (strain ATCC 700721 / MGH 78578).